The sequence spans 174 residues: Cytochrome c-550-like protein (174 aa).

The N-terminal stretch at 1–37 (MPGQTQGAKRWRVPGRGWRWAGILLLVWLGLASPAAG) is a signal peptide. Cys82, Cys85, His86, and Cys136 together coordinate heme c.

This sequence belongs to the cytochrome c family. PsbV subfamily. Requires heme c as cofactor.

It localises to the cellular thylakoid membrane. Possible low-potential cytochrome c. This Synechococcus sp. (strain JA-3-3Ab) (Cyanobacteria bacterium Yellowstone A-Prime) protein is Cytochrome c-550-like protein (psbV2).